A 276-amino-acid chain; its full sequence is Aquaporin-6 (276 aa).

Topologically, residues 1–22 (MEPGLCNRAYLLVGGLWTAISK) are cytoplasmic. A helical membrane pass occupies residues 23 to 43 (ALFAEFLATGLYVFFGVGSVL). At 44–51 (PWPVALPS) the chain is on the extracellular side. A helical transmembrane segment spans residues 52–70 (VLQVAITFNLATATAVQIS). At 71 to 75 (WKTSG) the chain is on the cytoplasmic side. Residues 76 to 85 (AHANPAVTLA) constitute an intramembrane region (discontinuously helical). Positions 79 to 81 (NPA) match the NPA 1 motif. Topologically, residues 86–96 (YLVGSHISLPR) are cytoplasmic. Residues 97-118 (AVAYIAAQLAGATVGAALLYGV) form a helical membrane-spanning segment. The Extracellular portion of the chain corresponds to 119 to 138 (TPGGVRETLGVNVVHNSTST). N-linked (GlcNAc...) asparagine glycosylation occurs at asparagine 134. The helical transmembrane segment at 139 to 159 (GQAVAVELVLTLQLVLCVFAS) threads the bilayer. Residues 160–165 (MDSRQT) are Cytoplasmic-facing. A helical transmembrane segment spans residues 166 to 185 (LGSPAAMIGTSVALGHLIGI). Residues 186–189 (YFTG) are Extracellular-facing. Residues 190–202 (CSMNPARSFGPAV) constitute an intramembrane region (discontinuously helical). Positions 193-195 (NPA) match the NPA 2 motif. Over 203–210 (IVGKFAVH) the chain is Extracellular. A helical membrane pass occupies residues 211-231 (WIFWVGPLTGAVLASLIYNFI). The Cytoplasmic portion of the chain corresponds to 232–276 (LFPDTKTVAQRLAILVGTTKVEKVVDLEPQKKESQTNSEDTEVSV).

Belongs to the MIP/aquaporin (TC 1.A.8) family. Homotetramer; each monomer provides an independent solute pore. N-glycosylated. As to expression, kidney.

Its subcellular location is the cytoplasmic vesicle membrane. It carries out the reaction nitrate(in) = nitrate(out). The catalysed reaction is iodide(out) = iodide(in). The enzyme catalyses bromide(in) = bromide(out). It catalyses the reaction chloride(in) = chloride(out). It carries out the reaction Na(+)(in) = Na(+)(out). The catalysed reaction is H2O(in) = H2O(out). The enzyme catalyses CO2(out) = CO2(in). It catalyses the reaction NH4(+)(in) = NH4(+)(out). Its activity is regulated as follows. Activated by mercury and pH-gated, anion permeability is observed at pH 5.5 and increases markedly at pH 4.0. Selectivity for chloride increases at low pH. The water channel activity is stimulated by mercury by opposition to other aquaporins. In terms of biological role, aquaporins form homotetrameric transmembrane channels, with each monomer independently mediating water transport across the plasma membrane along its osmotic gradient. Unlike classical aquaporins, AQP6 is an intracellular channel with selective anion permeability, particularly for nitrate, and exhibits very low water permeability. It may also facilitate the transport of gases, such as CO2 and NH4(+), as demonstrated in vitro. This Rattus norvegicus (Rat) protein is Aquaporin-6.